We begin with the raw amino-acid sequence, 189 residues long: Auxin-induced protein IAA4 (189 aa).

The short motif at 8–12 (LRLGL) is the EAR-like (transcriptional repression) element. The PB1 domain maps to 92–179 (GIFVKVSMDG…SCKRLRIMKG (88 aa)).

It belongs to the Aux/IAA family. In terms of assembly, homodimers and heterodimers. In terms of processing, phosphorylated by phytochrome A in vitro.

Its subcellular location is the nucleus. Aux/IAA proteins are short-lived transcriptional factors that function as repressors of early auxin response genes at low auxin concentrations. Repression is thought to result from the interaction with auxin response factors (ARFs), proteins that bind to the auxin-responsive promoter element (AuxRE). Formation of heterodimers with ARF proteins may alter their ability to modulate early auxin response genes expression. The polypeptide is Auxin-induced protein IAA4 (IAA4/5) (Pisum sativum (Garden pea)).